We begin with the raw amino-acid sequence, 601 residues long: DNA ligase (601 aa).

Asp-258 provides a ligand contact to ATP. The N6-AMP-lysine intermediate role is filled by Lys-260. Positions 265, 280, 310, 350, 427, and 433 each coordinate ATP. The interval 568 to 601 (DKSPEDATTTDEILEMYNKQPKKKIESPPIDESV) is disordered.

This sequence belongs to the ATP-dependent DNA ligase family. Requires Mg(2+) as cofactor.

The enzyme catalyses ATP + (deoxyribonucleotide)n-3'-hydroxyl + 5'-phospho-(deoxyribonucleotide)m = (deoxyribonucleotide)n+m + AMP + diphosphate.. Functionally, DNA ligase that seals nicks in double-stranded DNA during DNA replication, DNA recombination and DNA repair. This Saccharolobus islandicus (strain Y.N.15.51 / Yellowstone #2) (Sulfolobus islandicus) protein is DNA ligase.